A 466-amino-acid chain; its full sequence is Histidine--tRNA ligase (466 aa).

The protein belongs to the class-II aminoacyl-tRNA synthetase family. As to quaternary structure, homodimer.

The protein localises to the cytoplasm. The catalysed reaction is tRNA(His) + L-histidine + ATP = L-histidyl-tRNA(His) + AMP + diphosphate + H(+). The protein is Histidine--tRNA ligase of Xylella fastidiosa (strain M12).